The primary structure comprises 643 residues: MSMTPKTPILDTVNSPADLKNLPLDRLKSLADEVRAETIDAVSVTGGHLGAGLGVVELTTALHHVFDTPTDTLIWDVGHQCYPHKILTGRRDRIRTLRQPGGLSGFTKRSESEYDPFGAAHASTSISAALGFAVGRDLKDENRNVIAVIGDGSMSAGMAYEAMNNAGHIGGRLIVILNDNDMSIAPPVGAMSHYFARLVSSQRYRSIRKLGKGVAKALRVEEAARRAEEYMRGMAMGGTLFEEMGFRYVGPIDGHDLDQLVPVLRNVRDGDNGPVLIHVVTQKGKGYAPAEASDDKYHGVAKFNVITGEQQKSKAAAPSYTKVFAQQLIREAEADSRVVGVTAAMPGGTGLDLFGERFPDRMFDVGIAEQHAVTFAAGLAADGMKPFAAIYSTFLQRGYDQVVHDVAIQKLPVRFAIDRAGLVGADGATHAGSFDIGYLGALPGMVLMAAADELELSRMVKTAALIDDGPSAFRYPRGNGTGIEIPDQIEPLEIGKGRIVREGSRIAILSLGTRLEESLKAADALAAQGFSTTVADARFAKPLDEDLILRLAREHEVLITVEEGAVGGFGAFVLHMLADKGALDRGLRIRTLTLPDVFQDQEAPFDMYETAGLNARHIAAKALEAMGKDDAAAERVAAALIAG.

Thiamine diphosphate contacts are provided by residues His79 and 120–122 (AHA). Asp151 lines the Mg(2+) pocket. Thiamine diphosphate is bound by residues 152–153 (GS), Asn180, Tyr287, and Glu369. Asn180 is a Mg(2+) binding site.

The protein belongs to the transketolase family. DXPS subfamily. In terms of assembly, homodimer. Mg(2+) serves as cofactor. Thiamine diphosphate is required as a cofactor.

The catalysed reaction is D-glyceraldehyde 3-phosphate + pyruvate + H(+) = 1-deoxy-D-xylulose 5-phosphate + CO2. The protein operates within metabolic intermediate biosynthesis; 1-deoxy-D-xylulose 5-phosphate biosynthesis; 1-deoxy-D-xylulose 5-phosphate from D-glyceraldehyde 3-phosphate and pyruvate: step 1/1. Catalyzes the acyloin condensation reaction between C atoms 2 and 3 of pyruvate and glyceraldehyde 3-phosphate to yield 1-deoxy-D-xylulose-5-phosphate (DXP). This Maricaulis maris (strain MCS10) (Caulobacter maris) protein is 1-deoxy-D-xylulose-5-phosphate synthase.